We begin with the raw amino-acid sequence, 595 residues long: Estrogen receptor (595 aa).

The modulating (transactivation AF-1); mediates interaction with MACROD1 stretch occupies residues 1–184 (MTMTLHTKAS…AMESAKETRY (184 aa)). Residue S10 is glycosylated (O-linked (GlcNAc) serine). Positions 35-47 (LERPLGEVYVDGS) are required for interaction with NCOA1. Positions 35 to 174 (LERPLGEVYV…LASTGDKGSM (140 aa)) are interaction with DDX5; self-association. A phosphoserine; by CDK2 mark is found at S104 and S106. S118 is modified (phosphoserine). A disordered region spans residues 149–173 (FYRPTSDNRRQSGRERLASTGDKGS). Positions 154–165 (SDNRRQSGRERL) are enriched in basic and acidic residues. S167 bears the Phosphoserine; by CK2 mark. 2 NR C4-type zinc fingers span residues 185-205 (CAVC…CEGC) and 221-245 (CPAT…LRKC). The segment at residues 185–250 (CAVCNDYASG…RLRKCYEVGM (66 aa)) is a DNA-binding region (nuclear receptor). The mediates interaction with DNTTIP2 stretch occupies residues 185-310 (CAVCNDYASG…TKKNSPALSL (126 aa)). A hinge region spans residues 251–310 (MKGGIRKDRRGGRMLKHKRQRDEGEGRNEVGSSGDVRASNLWPSPLLIKHTKKNSPALSL). The span at 257–269 (KDRRGGRMLKHKR) shows a compositional bias: basic residues. Residues 257–287 (KDRRGGRMLKHKRQRDEGEGRNEVGSSGDVR) are disordered. At R260 the chain carries Asymmetric dimethylarginine; by PRMT1. Residues 262-595 (GRMLKHKRQR…EEAGAFPTTV (334 aa)) are interaction with AKAP13. A self-association region spans residues 264-595 (MLKHKRQRDE…EEAGAFPTTV (332 aa)). Positions 311 to 547 (TADQMVSALL…DLLLEMLDAH (237 aa)) constitute an NR LBD domain. A transactivation AF-2 region spans residues 311-595 (TADQMVSALL…EEAGAFPTTV (285 aa)). Residues E353 and R394 each coordinate 17beta-estradiol. C447 is lipidated: S-palmitoyl cysteine. H524 contributes to the 17beta-estradiol binding site. Y537 is subject to Phosphotyrosine; by Tyr-kinases. T571 is a glycosylation site (O-linked (GlcNAc) threonine).

Belongs to the nuclear hormone receptor family. NR3 subfamily. Binds DNA as a homodimer. Can form a heterodimer with ESR2. Interacts with coactivator NCOA5. Interacts with PELP1, the interaction is enhanced by 17-beta-estradiol; the interaction increases ESR1 transcriptional activity. Interacts with NCOA7; the interaction is ligand-inducible. Interacts with AKAP13, CUEDC2, HEXIM1, KDM5A, MAP1S, SMARD1, and UBE1C. Interacts with MUC1; the interaction is stimulated by 7 beta-estradiol (E2) and enhances ESR1-mediated transcription. Interacts with DNTTIP2, and UIMC1. Interacts with KMT2D/MLL2. Interacts with ATAD2; the interaction is enhanced by estradiol. Interacts with KIF18A and LDB1. Interacts with RLIM (via its C-terminus). Interacts with MACROD1. Interacts with SH2D4A and PLCG. Interacts with SH2D4A; the interaction blocks binding to PLCG and inhibits estrogen-induced cell proliferation. Interacts with DYNLL1. Interacts with CCDC62; the interaction requires estradiol and appears to enhance the transcription of target genes. Interacts with NR2C1; the interaction prevents homodimerization of ESR1 and suppresses its transcriptional activity and cell growth. Interacts with DNAAF4. Interacts with PRMT2. Interacts with RBFOX2. Interacts with EP300; the interaction is estrogen-dependent and enhanced by CITED1. Interacts with CITED1; the interaction is estrogen-dependent. Interacts with FAM120B, FOXL2, PHB2 and SLC30A9. Interacts with coactivators NCOA3 and NCOA6. Interacts with STK3/MST2 only in the presence of SAV1 and vice-versa. Binds to CSNK1D. Interacts with NCOA2; NCOA2 can interact with ESR1 AF-1 and AF-2 domains simultaneously and mediate their transcriptional synergy. Interacts with DDX5. Interacts with NCOA1; the interaction seems to require a self-association of N-terminal and C-terminal regions. Interacts with ZNF366, DDX17, NFKB1, RELA, SP1 and SP3. Interacts with NRIP1. Interacts with GPER1; the interaction occurs in an estrogen-dependent manner. Interacts with CLOCK and the interaction is stimulated by estrogen. Interacts with TRIP4 (ufmylated); estrogen dependent. Interacts with LMTK3; the interaction phosphorylates ESR1 (in vitro) and protects it against proteasomal degradation. Interacts with CCAR2 (via N-terminus) in a ligand-independent manner. Interacts with ZFHX3. Interacts with SFR1 in a ligand-dependent and -independent manner. Interacts with DCAF13, LATS1 and DCAF1; regulates ESR1 ubiquitination and ubiquitin-mediated proteasomal degradation. Interacts (via DNA-binding domain) with POU4F2 (C-terminus); this interaction increases the estrogen receptor ESR1 transcriptional activity in a DNA- and ligand 17-beta-estradiol-independent manner. Interacts with ESRRB isoform 1. Interacts with UBE3A and WBP2. Interacts with GTF2B. Interacts with RBM39. In the absence of hormonal ligand, interacts with TACC1. Interacts with PI3KR1 or PI3KR2 and PTK2/FAK1. Interacts with SRC. Interacts with BAG1; the interaction is promoted in the absence of estradiol (17-beta-estradiol/E2). Interacts with and ubiquitinated by STUB1; the interaction is promoted in the absence of estradiol (17-beta-estradiol/E2). Interacts with NEDD8. Post-translationally, ubiquitinated; regulated by LATS1 via DCAF1 it leads to ESR1 proteasomal degradation. Deubiquitinated by OTUB1. Ubiquitinated by STUB1/CHIP; in the CA1 hippocampal region following loss of endogenous circulating estradiol (17-beta-estradiol/E2). Ubiquitinated by UBR5, leading to its degradation: UBR5 specifically recognizes and binds ligand-bound ESR1 when it is not associated with coactivators (NCOAs). In presence of NCOAs, the UBR5-degron is not accessible, preventing its ubiquitination and degradation. Phosphorylated by cyclin A/CDK2 and CK1. Phosphorylation probably enhances transcriptional activity. Dephosphorylation at Ser-118 by PPP5C inhibits its transactivation activity. Phosphorylated by LMTK3 (in vitro). In terms of processing, palmitoylated at Cys-447 by ZDHHC7 and ZDHHC21. Palmitoylation is required for plasma membrane targeting and for rapid intracellular signaling via ERK and AKT kinases and cAMP generation, but not for signaling mediated by the nuclear hormone receptor. Post-translationally, dimethylated by PRMT1 at Arg-260. The methylation may favor cytoplasmic localization. Demethylated by JMJD6 at Arg-260.

The protein resides in the nucleus. It localises to the cytoplasm. The protein localises to the golgi apparatus. It is found in the cell membrane. In terms of biological role, nuclear hormone receptor. The steroid hormones and their receptors are involved in the regulation of eukaryotic gene expression and affect cellular proliferation and differentiation in target tissues. Ligand-dependent nuclear transactivation involves either direct homodimer binding to a palindromic estrogen response element (ERE) sequence or association with other DNA-binding transcription factors, such as AP-1/c-Jun, c-Fos, ATF-2, Sp1 and Sp3, to mediate ERE-independent signaling. Ligand binding induces a conformational change allowing subsequent or combinatorial association with multiprotein coactivator complexes through LXXLL motifs of their respective components. Mutual transrepression occurs between the estrogen receptor (ER) and NF-kappa-B in a cell-type specific manner. Decreases NF-kappa-B DNA-binding activity and inhibits NF-kappa-B-mediated transcription from the IL6 promoter and displace RELA/p65 and associated coregulators from the promoter. Recruited to the NF-kappa-B response element of the CCL2 and IL8 promoters and can displace CREBBP. Present with NF-kappa-B components RELA/p65 and NFKB1/p50 on ERE sequences. Can also act synergistically with NF-kappa-B to activate transcription involving respective recruitment adjacent response elements; the function involves CREBBP. Can activate the transcriptional activity of TFF1. Also mediates membrane-initiated estrogen signaling involving various kinase cascades. Essential for MTA1-mediated transcriptional regulation of BRCA1 and BCAS3. Maintains neuronal survival in response to ischemic reperfusion injury when in the presence of circulating estradiol (17-beta-estradiol/E2). The polypeptide is Estrogen receptor (ESR1) (Felis catus (Cat)).